We begin with the raw amino-acid sequence, 185 residues long: Ribosome-recycling factor (185 aa).

This sequence belongs to the RRF family.

Its subcellular location is the cytoplasm. Responsible for the release of ribosomes from messenger RNA at the termination of protein biosynthesis. May increase the efficiency of translation by recycling ribosomes from one round of translation to another. The sequence is that of Ribosome-recycling factor from Alkaliphilus oremlandii (strain OhILAs) (Clostridium oremlandii (strain OhILAs)).